The primary structure comprises 345 residues: MKEFDLESYDYYLPKELIANYPVLPKEKAKLLVYDRRSQTITHTTFEHVLDFFPKNALVVLNDTKVMKARLFGSKHAFLPSKTTEVFFHRFFKDNTALTQIKGKIKAGDKIFFDENYCAEVLELLHNGQRLIAFYDNQTPLNQENILKLLEQYGHMPLPPYIKRADESLDAHEYQSVFAKHIGAVAAPTASLHFSQHTLEKLLKDFKHAFLTLHVGAGTFLGVETKDIREHQIHTEVLRIPKKSQEILQKSQEILCIGTTALRSVEYFKRLENPNQEAFECDIFLHLANPILHVNYLLTNFHLPKSSLLMLVSAMIGLEKTKEIYKIAIEKKYRFYSYGDGMLIL.

This sequence belongs to the QueA family. Monomer.

The protein resides in the cytoplasm. It carries out the reaction 7-aminomethyl-7-carbaguanosine(34) in tRNA + S-adenosyl-L-methionine = epoxyqueuosine(34) in tRNA + adenine + L-methionine + 2 H(+). The protein operates within tRNA modification; tRNA-queuosine biosynthesis. Its function is as follows. Transfers and isomerizes the ribose moiety from AdoMet to the 7-aminomethyl group of 7-deazaguanine (preQ1-tRNA) to give epoxyqueuosine (oQ-tRNA). In Helicobacter pylori (strain P12), this protein is S-adenosylmethionine:tRNA ribosyltransferase-isomerase.